We begin with the raw amino-acid sequence, 82 residues long: Delta-ctenitoxin-Pn2c (82 aa).

A signal peptide spans 1–17; it reads MKVAILFLSILVLAVAS. A propeptide spanning residues 18-34 is cleaved from the precursor; the sequence is ESIEESRDDFAVEELGR. 5 disulfides stabilise this stretch: C37–C51, C44–C57, C48–C80, C50–C65, and C59–C63.

Expressed by the venom gland.

It localises to the secreted. Its function is as follows. Reversible inhibitor of voltage-gated sodium channels (Nav). Delays the fast inactivation kinetics of neuronal-type sodium channels. In vivo, it induces rat penile erection. This effect may be due to the neuronal nitric oxide synthase (NOS1), since one of its selective inhibitor completely abolishes all the toxic effects of the toxin. This toxin also causes scratching, lacrimation, hypersalivation, sweating and agitation followed by spastic paralysis of the anterior and posterior extremities and death at dose levels of 0.24 mg/mouse. It is also insecticidal to the larval and adult forms of the house fly. This is Delta-ctenitoxin-Pn2c from Phoneutria nigriventer (Brazilian armed spider).